We begin with the raw amino-acid sequence, 98 residues long: Small ribosomal subunit protein bS6 (98 aa).

The protein belongs to the bacterial ribosomal protein bS6 family.

Binds together with bS18 to 16S ribosomal RNA. The polypeptide is Small ribosomal subunit protein bS6 (Lactobacillus johnsonii (strain CNCM I-12250 / La1 / NCC 533)).